The primary structure comprises 236 residues: 2-C-methyl-D-erythritol 4-phosphate cytidylyltransferase (236 aa).

It belongs to the IspD/TarI cytidylyltransferase family. IspD subfamily. In terms of assembly, homodimer.

The catalysed reaction is 2-C-methyl-D-erythritol 4-phosphate + CTP + H(+) = 4-CDP-2-C-methyl-D-erythritol + diphosphate. The protein operates within isoprenoid biosynthesis; isopentenyl diphosphate biosynthesis via DXP pathway; isopentenyl diphosphate from 1-deoxy-D-xylulose 5-phosphate: step 2/6. Functionally, catalyzes the formation of 4-diphosphocytidyl-2-C-methyl-D-erythritol from CTP and 2-C-methyl-D-erythritol 4-phosphate (MEP). In Salmonella heidelberg (strain SL476), this protein is 2-C-methyl-D-erythritol 4-phosphate cytidylyltransferase.